Here is a 360-residue protein sequence, read N- to C-terminus: Codeine O-demethylase (360 aa).

The region spanning 211 to 311 (GLQTMRMNYY…RLSIATFHDS (101 aa)) is the Fe2OG dioxygenase domain. Tyrosine 220 is a 2-oxoglutarate binding site. The Fe cation site is built by histidine 235, aspartate 237, and histidine 292. 2 residues coordinate 2-oxoglutarate: arginine 302 and serine 304.

The protein belongs to the iron/ascorbate-dependent oxidoreductase family. The cofactor is L-ascorbate. Fe cation serves as cofactor. Mainly expressed in stems, capsules and leaves and, to a lower extent, in roots.

It carries out the reaction codeine + 2-oxoglutarate + O2 = morphine + formaldehyde + succinate + CO2. The enzyme catalyses thebaine + 2-oxoglutarate + O2 = oripavine + formaldehyde + succinate + CO2. The catalysed reaction is (S)-scoulerine + 2-oxoglutarate + O2 = (S)-3-O-demethylscoulerine + formaldehyde + succinate + CO2. It catalyses the reaction thebaine + 2-oxoglutarate + O2 = neopinone + formaldehyde + succinate + CO2. It carries out the reaction (S)-reticuline + 2-oxoglutarate + O2 = (S)-6-O-demethylreticuline + formaldehyde + succinate + CO2. The enzyme catalyses (S)-tetrahydropalmatine + S-adenosyl-L-methionine = (S)-cis-N-methyltetrahydropalmatine + S-adenosyl-L-homocysteine. It participates in alkaloid biosynthesis; morphine biosynthesis. Moderate substrate inhibition. Not inhibited in vitro by acylcyclohexanediones. Non-heme dioxygenase involved in biosynthesis of morphinan-type benzylisoquinoline and opiate alkaloids natural products. Mediates the conversion of codeine to morphine. Also catalyzes, with lower efficiency, the 3-O-demethylation of thebaine to oripavine and of (S)-scoulerine to 3-O-demethylscoulerine. Supports, with a lower turnover, the conversion of codeinone to morphinone, of thebaine to neopinone, and of neopine to neomorphine. Supports dealkylation reactions such as O,O-demethylenation in the metabolism of protopine, benzo[c]phenanthridine, and rhoeadine alkaloids; cleaves a methylenedioxy bridge leaving two hydroxyl groups. Catalyzes the O,O-demethylenation of methylenedioxy bridges on protopine alkaloids such as allocryptopine, cryptopine and protopine. No activity with (S)-reticuline, salutaridine, papaverine, (S)-corytuberine, oripavine, pavine or noscapine. This is Codeine O-demethylase from Papaver somniferum (Opium poppy).